The primary structure comprises 120 residues: MRRTAFIVLSLVALIAPCVTSVAVEDLAQANNIETNVNPNVKVGSRRHLRSEANGRLAVVDEEKVFRDFCGLGPCFDWLKPQNLGGFIYKFVEWASRDRVNFKLKMLKREHQIPIRKRNQ.

Positions 1–21 (MRRTAFIVLSLVALIAPCVTS) are cleaved as a signal peptide. A RxLR-dEER motif is present at residues 47-64 (RHLRSEANGRLAVVDEEK).

The protein belongs to the RxLR effector family.

The protein resides in the secreted. It localises to the host cytoplasm. It is found in the host nucleus. Functionally, effector that acts as a broad suppressor of cell death to interrupt plant immunity. Inhibits cell death induced by cell death-inducing proteins, including the PAMP elicitor INF1 from P.infestans. The chain is Secreted RxLR effector protein 29 from Plasmopara viticola (Downy mildew of grapevine).